Here is a 264-residue protein sequence, read N- to C-terminus: Thymidylate synthase (264 aa).

Arg21 provides a ligand contact to dUMP. Residue His51 coordinates (6R)-5,10-methylene-5,6,7,8-tetrahydrofolate. Residue 126-127 participates in dUMP binding; that stretch reads RR. The Nucleophile role is filled by Cys146. Residues 166 to 169, Asn177, and 207 to 209 contribute to the dUMP site; these read RSAD and HIY. Asp169 is a (6R)-5,10-methylene-5,6,7,8-tetrahydrofolate binding site. A (6R)-5,10-methylene-5,6,7,8-tetrahydrofolate-binding site is contributed by Ala263.

This sequence belongs to the thymidylate synthase family. Bacterial-type ThyA subfamily. As to quaternary structure, homodimer.

The protein localises to the cytoplasm. The enzyme catalyses dUMP + (6R)-5,10-methylene-5,6,7,8-tetrahydrofolate = 7,8-dihydrofolate + dTMP. Its pathway is pyrimidine metabolism; dTTP biosynthesis. Functionally, catalyzes the reductive methylation of 2'-deoxyuridine-5'-monophosphate (dUMP) to 2'-deoxythymidine-5'-monophosphate (dTMP) while utilizing 5,10-methylenetetrahydrofolate (mTHF) as the methyl donor and reductant in the reaction, yielding dihydrofolate (DHF) as a by-product. This enzymatic reaction provides an intracellular de novo source of dTMP, an essential precursor for DNA biosynthesis. The polypeptide is Thymidylate synthase (Parabacteroides distasonis (strain ATCC 8503 / DSM 20701 / CIP 104284 / JCM 5825 / NCTC 11152)).